We begin with the raw amino-acid sequence, 379 residues long: Cytochrome b (379 aa).

4 helical membrane passes run 33-53 (FGSL…FLAM), 77-98 (WTIR…FIHV), 113-133 (WNVG…GYVL), and 178-198 (FFAL…IHLL). Heme b contacts are provided by histidine 83 and histidine 97. Histidine 182 and histidine 196 together coordinate heme b. Histidine 201 lines the a ubiquinone pocket. Transmembrane regions (helical) follow at residues 226–246 (TKDF…ALFY), 288–308 (LGGV…PFLQ), 320–340 (LSQF…WIGG), and 347–367 (FINI…FIMP).

The protein belongs to the cytochrome b family. As to quaternary structure, the cytochrome bc1 complex contains 11 subunits: 3 respiratory subunits (MT-CYB, CYC1 and UQCRFS1), 2 core proteins (UQCRC1 and UQCRC2) and 6 low-molecular weight proteins (UQCRH/QCR6, UQCRB/QCR7, UQCRQ/QCR8, UQCR10/QCR9, UQCR11/QCR10 and a cleavage product of UQCRFS1). This cytochrome bc1 complex then forms a dimer. Requires heme b as cofactor.

It is found in the mitochondrion inner membrane. Functionally, component of the ubiquinol-cytochrome c reductase complex (complex III or cytochrome b-c1 complex) that is part of the mitochondrial respiratory chain. The b-c1 complex mediates electron transfer from ubiquinol to cytochrome c. Contributes to the generation of a proton gradient across the mitochondrial membrane that is then used for ATP synthesis. The sequence is that of Cytochrome b (MT-CYB) from Lepilemur ankaranensis (Ankarana sportive lemur).